Here is a 492-residue protein sequence, read N- to C-terminus: GTPase Der (492 aa).

2 EngA-type G domains span residues Pro3 to Glu167 and Ile188 to Ala363. Residues Gly9–Ser16, Asp56–Phe60, Asn119–Glu122, Gly194–Ser201, Asp241–Ile245, and Asn306–Asp309 contribute to the GTP site. A KH-like domain is found at Tyr364–Thr448. The tract at residues Val464 to Gly492 is disordered. Residues Lys469 to Gly492 are compositionally biased toward basic residues.

It belongs to the TRAFAC class TrmE-Era-EngA-EngB-Septin-like GTPase superfamily. EngA (Der) GTPase family. Associates with the 50S ribosomal subunit.

In terms of biological role, GTPase that plays an essential role in the late steps of ribosome biogenesis. This chain is GTPase Der, found in Desulforapulum autotrophicum (strain ATCC 43914 / DSM 3382 / VKM B-1955 / HRM2) (Desulfobacterium autotrophicum).